The sequence spans 100 residues: Small ribosomal subunit protein uS14c (100 aa).

It belongs to the universal ribosomal protein uS14 family. As to quaternary structure, part of the 30S ribosomal subunit.

It localises to the plastid. Its subcellular location is the chloroplast. In terms of biological role, binds 16S rRNA, required for the assembly of 30S particles. The chain is Small ribosomal subunit protein uS14c from Zygnema circumcarinatum (Green alga).